Reading from the N-terminus, the 273-residue chain is WIMGHMVNAIYQIDEFVNLGANSIETDVSFDDNANPEYTYHGIPCDCGRSCLKWENYNDFLKGLRSATTPGNSKYQSKLILVVFDLKTGSLYDNQASEAGKKLAKNLLKHYWNNGNNGGRAYIVLSIPDLNHYPLIKGFTDTLKQEGHPELLEKVGYDFSGNDAIGDVVKAYKKAGVSGHVWQSDGITNCLLRGLSRVKDAVANRDSGKGYINKVYYWTVDKRATTRDALDAGVDGVMTNYPDVIADVMNEAAYKNKVRLATYEDSPWVTFKK.

H5 is a catalytic residue. Mg(2+) contacts are provided by E25 and D27. Catalysis depends on H41, which acts as the Nucleophile. 2 disulfides stabilise this stretch: C45-C51 and C47-C190. A Mg(2+)-binding site is contributed by D85.

It belongs to the arthropod phospholipase D family. Class II subfamily. It depends on Mg(2+) as a cofactor. Expressed by the venom gland.

The protein localises to the secreted. It catalyses the reaction an N-(acyl)-sphingosylphosphocholine = an N-(acyl)-sphingosyl-1,3-cyclic phosphate + choline. It carries out the reaction an N-(acyl)-sphingosylphosphoethanolamine = an N-(acyl)-sphingosyl-1,3-cyclic phosphate + ethanolamine. The enzyme catalyses a 1-acyl-sn-glycero-3-phosphocholine = a 1-acyl-sn-glycero-2,3-cyclic phosphate + choline. The catalysed reaction is a 1-acyl-sn-glycero-3-phosphoethanolamine = a 1-acyl-sn-glycero-2,3-cyclic phosphate + ethanolamine. In terms of biological role, dermonecrotic toxins cleave the phosphodiester linkage between the phosphate and headgroup of certain phospholipids (sphingolipid and lysolipid substrates), forming an alcohol (often choline) and a cyclic phosphate. This toxin acts on sphingomyelin (SM). It may also act on ceramide phosphoethanolamine (CPE), lysophosphatidylcholine (LPC) and lysophosphatidylethanolamine (LPE), but not on lysophosphatidylserine (LPS), and lysophosphatidylglycerol (LPG). It acts by transphosphatidylation, releasing exclusively cyclic phosphate products as second products. Induces dermonecrosis, hemolysis, increased vascular permeability, edema, inflammatory response, and platelet aggregation. This Loxosceles hirsuta (Recluse spider) protein is Dermonecrotic toxin LhSicTox-alphaIA2bii.